The chain runs to 206 residues: Twist-related protein 1 (206 aa).

A compositionally biased stretch (low complexity) spans 1-18; it reads MMQDVSSSPVSPADDSLS. A disordered region spans residues 1 to 109; that stretch reads MMQDVSSSPV…GGGSPQSYEE (109 aa). The segment covering 34 to 43 has biased composition (basic residues); the sequence is RGARKRRSSR. 2 stretches are compositionally biased toward gly residues: residues 48 to 65 and 78 to 103; these read GSAG…GGDE and SAGG…GGGS. Residues 112-163 form the bHLH domain; the sequence is TQRVMANVRERQRTQSLNEAFAALRKIIPTLPSDKLSKIQTLKLAARYIDFL. The segment at 165-195 is sufficient for transactivation activity; that stretch reads QVLQSDELDSKMASCSYVAHERLSYAFSVWR.

Efficient DNA binding requires dimerization with another bHLH protein. Homodimer or heterodimer with E proteins such as TCF3. ID1 binds preferentially to TCF3 but does not interact efficiently with TWIST1 so ID1 levels control the amount of TCF3 available to dimerize with TWIST1 and thus determine the type of dimer formed. As to expression, subset of mesodermal cells.

It is found in the nucleus. In terms of biological role, acts as a transcriptional regulator. Inhibits myogenesis by sequestrating E proteins, inhibiting trans-activation by MEF2, and inhibiting DNA-binding by MYOD1 through physical interaction. This interaction probably involves the basic domains of both proteins. Also represses expression of pro-inflammatory cytokines such as TNFA and IL1B. Regulates cranial suture patterning and fusion. Activates transcription as a heterodimer with E proteins. Regulates gene expression differentially, depending on dimer composition. Homodimers induce expression of FGFR2 and POSTN while heterodimers repress FGFR2 and POSTN expression and induce THBS1 expression. Heterodimerization is also required for osteoblast differentiation. Represses the activity of the circadian transcriptional activator: NPAS2-BMAL1 heterodimer. In Mus musculus (Mouse), this protein is Twist-related protein 1 (Twist1).